The following is a 243-amino-acid chain: Phosphoribosylaminoimidazole-succinocarboxamide synthase (243 aa).

It belongs to the SAICAR synthetase family.

The catalysed reaction is 5-amino-1-(5-phospho-D-ribosyl)imidazole-4-carboxylate + L-aspartate + ATP = (2S)-2-[5-amino-1-(5-phospho-beta-D-ribosyl)imidazole-4-carboxamido]succinate + ADP + phosphate + 2 H(+). The protein operates within purine metabolism; IMP biosynthesis via de novo pathway; 5-amino-1-(5-phospho-D-ribosyl)imidazole-4-carboxamide from 5-amino-1-(5-phospho-D-ribosyl)imidazole-4-carboxylate: step 1/2. The polypeptide is Phosphoribosylaminoimidazole-succinocarboxamide synthase (Thermosynechococcus vestitus (strain NIES-2133 / IAM M-273 / BP-1)).